A 366-amino-acid polypeptide reads, in one-letter code: Ribosomal RNA large subunit methyltransferase M (366 aa).

S-adenosyl-L-methionine is bound by residues serine 188, 221–224 (CPGG), aspartate 240, aspartate 260, and aspartate 277. Lysine 306 serves as the catalytic Proton acceptor.

Belongs to the class I-like SAM-binding methyltransferase superfamily. RNA methyltransferase RlmE family. RlmM subfamily. As to quaternary structure, monomer.

The protein resides in the cytoplasm. It carries out the reaction cytidine(2498) in 23S rRNA + S-adenosyl-L-methionine = 2'-O-methylcytidine(2498) in 23S rRNA + S-adenosyl-L-homocysteine + H(+). Catalyzes the 2'-O-methylation at nucleotide C2498 in 23S rRNA. In Salmonella dublin (strain CT_02021853), this protein is Ribosomal RNA large subunit methyltransferase M.